Here is a 322-residue protein sequence, read N- to C-terminus: Undecaprenyl-phosphate 4-deoxy-4-formamido-L-arabinose transferase (322 aa).

The Cytoplasmic segment spans residues 1-235 (MFEIHPVKKV…TCLTTTPLRM (235 aa)). Residues 236 to 256 (LSLLGSIIAIGGFSIAVLLVI) form a helical membrane-spanning segment. Residues 257–269 (LRLTFGPQWAAEG) are Periplasmic-facing. A helical transmembrane segment spans residues 270-290 (VFMLFAVLFTFIGAQFIGMGL). Over 291–322 (LGEYIGRIYTDVRARPRYFVQQVIRPSSKENE) the chain is Cytoplasmic.

Belongs to the glycosyltransferase 2 family.

It is found in the cell inner membrane. It carries out the reaction UDP-4-deoxy-4-formamido-beta-L-arabinose + di-trans,octa-cis-undecaprenyl phosphate = 4-deoxy-4-formamido-alpha-L-arabinopyranosyl di-trans,octa-cis-undecaprenyl phosphate + UDP. It functions in the pathway glycolipid biosynthesis; 4-amino-4-deoxy-alpha-L-arabinose undecaprenyl phosphate biosynthesis; 4-amino-4-deoxy-alpha-L-arabinose undecaprenyl phosphate from UDP-4-deoxy-4-formamido-beta-L-arabinose and undecaprenyl phosphate: step 1/2. The protein operates within bacterial outer membrane biogenesis; lipopolysaccharide biosynthesis. In terms of biological role, catalyzes the transfer of 4-deoxy-4-formamido-L-arabinose from UDP to undecaprenyl phosphate. The modified arabinose is attached to lipid A and is required for resistance to polymyxin and cationic antimicrobial peptides. The chain is Undecaprenyl-phosphate 4-deoxy-4-formamido-L-arabinose transferase from Shigella dysenteriae serotype 1 (strain Sd197).